The following is a 295-amino-acid chain: Nucleotide-binding protein llmg_1557 (295 aa).

12–19 is an ATP binding site; that stretch reads GMSGAGKT. 63 to 66 provides a ligand contact to GTP; that stretch reads DMRS.

Belongs to the RapZ-like family.

In terms of biological role, displays ATPase and GTPase activities. This is Nucleotide-binding protein llmg_1557 from Lactococcus lactis subsp. cremoris (strain MG1363).